The chain runs to 103 residues: UPF0122 protein FN1394 (103 aa).

The protein belongs to the UPF0122 family.

Might take part in the signal recognition particle (SRP) pathway. This is inferred from the conservation of its genetic proximity to ftsY/ffh. May be a regulatory protein. This Fusobacterium nucleatum subsp. nucleatum (strain ATCC 25586 / DSM 15643 / BCRC 10681 / CIP 101130 / JCM 8532 / KCTC 2640 / LMG 13131 / VPI 4355) protein is UPF0122 protein FN1394.